Consider the following 366-residue polypeptide: uncharacterized protein (366 aa).

Positions 1–135 are disordered; that stretch reads MNQTGRTIGG…PPKNVDTIDK (135 aa). Basic and acidic residues predominate over residues 26 to 38; that stretch reads PSEDRVSSRDETP. At Ser-69 the chain carries Phosphoserine. At Thr-76 the chain carries Phosphothreonine. Lys-78 participates in a covalent cross-link: Glycyl lysine isopeptide (Lys-Gly) (interchain with G-Cter in ubiquitin). Positions 97 to 108 are enriched in basic residues; it reads QHNHHHHRRTSH. Lys-187 participates in a covalent cross-link: Glycyl lysine isopeptide (Lys-Gly) (interchain with G-Cter in ubiquitin). Thr-189 carries the post-translational modification Phosphothreonine. Residue Lys-242 forms a Glycyl lysine isopeptide (Lys-Gly) (interchain with G-Cter in ubiquitin) linkage. Ser-288 and Ser-294 each carry phosphoserine. The tract at residues 313–366 is disordered; it reads THSGHLEQKDVDDNRTSVPVTATQGSGHEDVVKKENTGNKLLRRVKSLKTSKKH. Basic and acidic residues predominate over residues 316–327; it reads GHLEQKDVDDNR. Over residues 328–338 the composition is skewed to polar residues; it reads TSVPVTATQGS. Residues 339–349 are compositionally biased toward basic and acidic residues; sequence GHEDVVKKENT. Residues 353–366 show a composition bias toward basic residues; the sequence is LLRRVKSLKTSKKH. At Ser-359 the chain carries Phosphoserine.

The protein belongs to the pal1 family.

The protein resides in the cytoplasm. The protein localises to the nucleus. This is an uncharacterized protein from Saccharomyces cerevisiae (strain ATCC 204508 / S288c) (Baker's yeast).